We begin with the raw amino-acid sequence, 335 residues long: Serine/threonine-protein kinase crk1 (335 aa).

In terms of domain architecture, Protein kinase spans 11–292; that stretch reads YVKERKVGEG…AQQALEHHYF (282 aa). ATP is bound by residues 17–25 and K40; that span reads VGEGTYAVV. Residue D133 is the Proton acceptor of the active site. S162 is subject to Phosphoserine. The residue at position 165 (S165) is a Phosphoserine; by CAK. Phosphoserine is present on S318.

The protein belongs to the protein kinase superfamily. CMGC Ser/Thr protein kinase family. CDC2/CDKX subfamily. One of the nine subunits forming the core-TFIIH basal transcription factor. Interacts with mcs2 and tfb3.

It localises to the cytoplasm. It is found in the nucleus. It catalyses the reaction [DNA-directed RNA polymerase] + ATP = phospho-[DNA-directed RNA polymerase] + ADP + H(+). Functionally, protein kinase essential for cell proliferation, where it is required for completion of cytokinesis. Phosphorylates the C-terminal repeat domain (CTD) of RNA polymerase II. This Schizosaccharomyces pombe (strain 972 / ATCC 24843) (Fission yeast) protein is Serine/threonine-protein kinase crk1 (crk1).